A 2419-amino-acid polypeptide reads, in one-letter code: Telomere-associated protein RIF1 (2419 aa).

Disordered stretches follow at residues 1 to 24 (MTAP…VPPG) and 373 to 408 (SIPS…SPRG). Positions 373 to 385 (SIPSPQGNSSRGS) are enriched in polar residues. A phosphoserine mark is found at serine 385, serine 391, serine 779, serine 976, and serine 1005. Position 1044 is a phosphothreonine (threonine 1044). The span at 1184–1198 (SSSTETSVVSSSSVS) shows a compositional bias: low complexity. Disordered regions lie at residues 1184 to 1594 (SSST…QAVP) and 1613 to 1637 (RVIL…EKSK). Polar residues-rich tracts occupy residues 1199 to 1217 (NATF…QTFI) and 1228 to 1255 (RPFS…TNTD). Threonine 1215 carries the phosphothreonine modification. Phosphoserine occurs at positions 1231 and 1233. Basic and acidic residues predominate over residues 1263–1272 (REVTNSKSDS). Positions 1289–1302 (AEQSVTKKSKPSLT) are enriched in polar residues. Residues 1323–1345 (HVSENDDHPSEATLEHKDGDPKP) show a composition bias toward basic and acidic residues. Serine 1407, serine 1439, serine 1457, and serine 1498 each carry phosphoserine. Residues 1416–1455 (SQERESGQQKKERRKEEEKIISKSPLRIKDDKLPTQKLTD) show a composition bias toward basic and acidic residues. A compositionally biased stretch (polar residues) spans 1457 to 1467 (SPIQENLTEKG). At threonine 1504 the chain carries Phosphothreonine. Over residues 1507 to 1516 (NLDKSSEKPL) the composition is skewed to basic and acidic residues. Residues 1525–1537 (RRASQGLISAVEN) show a composition bias toward polar residues. Residues serine 1528, serine 1538, serine 1540, serine 1542, and serine 1550 each carry the phosphoserine modification. Over residues 1551 to 1560 (RKKRSGKWKN) the composition is skewed to basic residues. Serine 1562 and serine 1565 each carry phosphoserine. Positions 1572–1581 (EEKKAEEEVM) are enriched in basic and acidic residues. Phosphoserine occurs at positions 1680 and 1683. Residue threonine 1780 is modified to Phosphothreonine. Phosphoserine is present on serine 1784. Positions 1812–1836 (ASEAVSEIQGPCSENHSPAEDPGLS) are disordered. Serine 1842 carries the post-translational modification Phosphoserine. Residues 1882 to 2419 (DAFVAADSEK…RWRSPAHENS (538 aa)) form an interaction with condensed chromosomes in telophase region. 2 disordered regions span residues 1890-1914 (EKST…ECEA) and 1929-1983 (FNSG…AQMS). Phosphoserine is present on residues serine 1931, serine 2094, serine 2109, serine 2121, serine 2125, serine 2144, serine 2153, serine 2208, serine 2287, serine 2341, serine 2413, and serine 2419. Residues 2119-2394 (VWSPLASPST…TGSQLFEMHE (276 aa)) are interaction with ERCC6. The tract at residues 2182-2212 (SPIIKSVKTSPTSHSKHNTTSAKGFLSPGSQ) is disordered. Polar residues predominate over residues 2189 to 2212 (KTSPTSHSKHNTTSAKGFLSPGSQ).

It belongs to the RIF1 family. As to quaternary structure, interacts with TP53BP1 (when phosphorylated by ATM). May interact with TRF2. Interacts with SHLD2. Interacts with ERCC6 (via WHD region). Interacts with ASTE1. In terms of tissue distribution, expressed in Sertoli cells, prospermatagonia, early primary spermatocytes, and in oocytes at all stages of their growth. Expressed in embryonic stem (ES) and embryonic germ (EG) cells: expression is lost upon differentiation.

The protein resides in the nucleus. The protein localises to the chromosome. Its subcellular location is the telomere. It localises to the cytoplasm. It is found in the cytoskeleton. The protein resides in the spindle. Key regulator of TP53BP1 that plays a key role in the repair of double-strand DNA breaks (DSBs) in response to DNA damage: acts by promoting non-homologous end joining (NHEJ)-mediated repair of DSBs. In response to DNA damage, interacts with ATM-phosphorylated TP53BP1. Interaction with TP53BP1 leads to dissociate the interaction between NUDT16L1/TIRR and TP53BP1, thereby unmasking the tandem Tudor-like domain of TP53BP1 and allowing recruitment to DNA DSBs. Once recruited to DSBs, RIF1 and TP53BP1 act by promoting NHEJ-mediated repair of DSBs. In the same time, RIF1 and TP53BP1 specifically counteract the function of BRCA1 by blocking DSBs resection via homologous recombination (HR) during G1 phase. Also required for immunoglobulin class-switch recombination (CSR) during antibody genesis, a process that involves the generation of DNA DSBs. Promotes NHEJ of dysfunctional telomeres. This Mus musculus (Mouse) protein is Telomere-associated protein RIF1.